The primary structure comprises 294 residues: Ribosomal RNA small subunit methyltransferase H (294 aa).

S-adenosyl-L-methionine is bound by residues 40–42, Asp-59, Phe-86, Asp-102, and Gln-109; that span reads GGH.

Belongs to the methyltransferase superfamily. RsmH family.

The protein resides in the cytoplasm. The enzyme catalyses cytidine(1402) in 16S rRNA + S-adenosyl-L-methionine = N(4)-methylcytidine(1402) in 16S rRNA + S-adenosyl-L-homocysteine + H(+). Functionally, specifically methylates the N4 position of cytidine in position 1402 (C1402) of 16S rRNA. The polypeptide is Ribosomal RNA small subunit methyltransferase H (Cyanothece sp. (strain PCC 7425 / ATCC 29141)).